Consider the following 461-residue polypeptide: UDP-glucosyltransferase 1 (461 aa).

Belongs to the UDP-glycosyltransferase family.

The protein operates within secondary metabolite biosynthesis. Functionally, UDP-glucosyltransferase; part of the pathway that mediates the biosynthesis of tenellin-type 2-pyridones, iron-chelating compounds involved in iron stress tolerance, competition with the natural competitor fungus Metarhizium robertsii and insect hosts infection. Targets the N-OH hydroxyl residue of 15-hydroxytellenin (15-HT) to produce pyridovericin-N-O-(beta-D-glucopyranoside) which is further methylated by the methyltransferase MT1 to yield pyridovericin-N-O-(4-O-methyl-beta-D-glucopyranoside) (PMGP). The pathway begins with the assembly of the polyketide-amino acid backbone by the hybrid PKS-NRPS tenS with the help of the enoyl reductase tenC. These enzymes catalyze the synthesis of the pyrrolidine-2-dione intermediates pretellinin A, 11-hydropretellenin A, 12-hydropretellenin A, 13-hydropretellenin A, 14-hydropretellenin A, 12-oxopretellenin A and prototellinin D. The cytochrome P450 monooxygenase tenA then catalyzes an oxidative ring expansion of pretenellin A and 14-hydropretellenin A to form the 2-pyridone core, leading to pretenellin B and pyridovericin, respectively. The cytochrome P450 monooxygenase tenB is then required for the selective N-hydroxylation of the 2-pyridone nitrogen of yield tellinin and 15-hydroxytellenin (15-HT), respectively. The UDP-glucosyltransferase GT1 and the methyltransferase MT1, located outside the tenS gene cluster, contribute to the stepwise glycosylation and methylation of 15-HT to obtain the glycoside pyridovericin-N-O-(4-O-methyl-beta-D-glucopyranoside) (PMGP). Additional related compounds such as 1-O-methyl-15-HT, (8Z)-1-O-methyl-15-HT, and O-methyltenellin A are also produced but the enzymes involved in their biosynthesis have still to be determined. The protein is UDP-glucosyltransferase 1 of Beauveria bassiana (strain ARSEF 2860) (White muscardine disease fungus).